Consider the following 274-residue polypeptide: Large ribosomal subunit protein uL2cz (274 aa).

Disordered regions lie at residues 1-25 (MAIH…VKSN) and 224-274 (NPVD…RRSK). A compositionally biased stretch (polar residues) spans 7–25 (KTSTPSTRNGTVDSQVKSN).

This sequence belongs to the universal ribosomal protein uL2 family. In terms of assembly, part of the 50S ribosomal subunit.

It is found in the plastid. The protein localises to the chloroplast. This Atropa belladonna (Belladonna) protein is Large ribosomal subunit protein uL2cz (rpl2-A).